Here is a 141-residue protein sequence, read N- to C-terminus: Large ribosomal subunit protein uL11 (141 aa).

Belongs to the universal ribosomal protein uL11 family. In terms of assembly, part of the ribosomal stalk of the 50S ribosomal subunit. Interacts with L10 and the large rRNA to form the base of the stalk. L10 forms an elongated spine to which L12 dimers bind in a sequential fashion forming a multimeric L10(L12)X complex. One or more lysine residues are methylated.

Functionally, forms part of the ribosomal stalk which helps the ribosome interact with GTP-bound translation factors. The chain is Large ribosomal subunit protein uL11 from Exiguobacterium sp. (strain ATCC BAA-1283 / AT1b).